The chain runs to 85 residues: DNA-directed RNA polymerase subunit Rpo11 (85 aa).

Belongs to the archaeal Rpo11/eukaryotic RPB11/RPC19 RNA polymerase subunit family. In terms of assembly, part of the RNA polymerase complex.

It localises to the cytoplasm. The catalysed reaction is RNA(n) + a ribonucleoside 5'-triphosphate = RNA(n+1) + diphosphate. Functionally, DNA-dependent RNA polymerase (RNAP) catalyzes the transcription of DNA into RNA using the four ribonucleoside triphosphates as substrates. The protein is DNA-directed RNA polymerase subunit Rpo11 of Methanothermobacter thermautotrophicus (strain ATCC 29096 / DSM 1053 / JCM 10044 / NBRC 100330 / Delta H) (Methanobacterium thermoautotrophicum).